A 923-amino-acid chain; its full sequence is Isoleucine--tRNA ligase (923 aa).

The 'HIGH' region motif lies at proline 57 to histidine 67. Glutamate 553 serves as a coordination point for L-isoleucyl-5'-AMP. Positions lysine 594–serine 598 match the 'KMSKS' region motif. Lysine 597 lines the ATP pocket. Residues cysteine 888, cysteine 891, cysteine 908, and cysteine 911 each contribute to the Zn(2+) site.

This sequence belongs to the class-I aminoacyl-tRNA synthetase family. IleS type 1 subfamily. As to quaternary structure, monomer. Zn(2+) is required as a cofactor.

Its subcellular location is the cytoplasm. It catalyses the reaction tRNA(Ile) + L-isoleucine + ATP = L-isoleucyl-tRNA(Ile) + AMP + diphosphate. In terms of biological role, catalyzes the attachment of isoleucine to tRNA(Ile). As IleRS can inadvertently accommodate and process structurally similar amino acids such as valine, to avoid such errors it has two additional distinct tRNA(Ile)-dependent editing activities. One activity is designated as 'pretransfer' editing and involves the hydrolysis of activated Val-AMP. The other activity is designated 'posttransfer' editing and involves deacylation of mischarged Val-tRNA(Ile). This is Isoleucine--tRNA ligase from Shouchella clausii (strain KSM-K16) (Alkalihalobacillus clausii).